Here is a 121-residue protein sequence, read N- to C-terminus: Ribosome-binding factor A (121 aa).

Belongs to the RbfA family. In terms of assembly, monomer. Binds 30S ribosomal subunits, but not 50S ribosomal subunits or 70S ribosomes.

The protein resides in the cytoplasm. One of several proteins that assist in the late maturation steps of the functional core of the 30S ribosomal subunit. Associates with free 30S ribosomal subunits (but not with 30S subunits that are part of 70S ribosomes or polysomes). Required for efficient processing of 16S rRNA. May interact with the 5'-terminal helix region of 16S rRNA. In Clostridium novyi (strain NT), this protein is Ribosome-binding factor A.